Reading from the N-terminus, the 91-residue chain is Bacterial microcompartment shell protein PduJ (91 aa).

The BMC domain maps to 4–88; it reads ALGLVETKGL…PHSDVEAILP (85 aa).

It belongs to the bacterial microcompartments protein family. In terms of assembly, homohexamer with a central pore of about 5.7 Angstroms in diameter. Interacts with PduP, which targets PduP to the BMC.

Its subcellular location is the bacterial microcompartment. It participates in polyol metabolism; 1,2-propanediol degradation. In terms of biological role, one of the major shell proteins of the bacterial microcompartment (BMC) dedicated to 1,2-propanediol (1,2-PD) degradation. The isolated BMC shell component protein ratio for J:A:B':B:K:T:U is approximately 15:10:7:6:1:1:2. At least one of PduA or PduJ is required for BMC assembly; it must be encoded as the first gene in the pdu operon. Required for structural integrity of BMCs and to mitigate propionaldehyde toxicity, probably joins facets responsible for BMC closure. Edge residues (particularly Lys-25) are important for function and assembly of the BMC. 80% identical to PduA; although their pore regions appear structurally identical, unlike PduA plays no role in 1,2-PD diffusion into or out of the BMC shell. If pduJ is cloned in the chromosomal position of pduA it is able to complement a pduA deletion; it then has a functional pore as it assumes the transport functions of PduA. Overexpression of this protein leads to aberrant filaments that extend the length of the cell, cross the cleavage furrow and impair division. The filaments form nanotubes with a hollow center. Modeling suggests PduJ is probably the hub for binding multiple enzymes to the interior of the BMC; modeling suggests PduC, PduD, PduG and PduM are targeted to PduJ. The 1,2-propanediol (1,2-PD) degradation bacterial microcompartment (BMC) concentrates low levels of 1,2-PD catabolic enzymes, concentrates volatile reaction intermediates thus enhancing pathway flux and keeps the level of toxic, mutagenic propionaldehyde low. This chain is Bacterial microcompartment shell protein PduJ, found in Salmonella typhimurium (strain LT2 / SGSC1412 / ATCC 700720).